A 288-amino-acid polypeptide reads, in one-letter code: ATP phosphoribosyltransferase (288 aa).

Belongs to the ATP phosphoribosyltransferase family. Long subfamily. It depends on Mg(2+) as a cofactor.

It localises to the cytoplasm. The catalysed reaction is 1-(5-phospho-beta-D-ribosyl)-ATP + diphosphate = 5-phospho-alpha-D-ribose 1-diphosphate + ATP. It functions in the pathway amino-acid biosynthesis; L-histidine biosynthesis; L-histidine from 5-phospho-alpha-D-ribose 1-diphosphate: step 1/9. With respect to regulation, feedback inhibited by histidine. In terms of biological role, catalyzes the condensation of ATP and 5-phosphoribose 1-diphosphate to form N'-(5'-phosphoribosyl)-ATP (PR-ATP). Has a crucial role in the pathway because the rate of histidine biosynthesis seems to be controlled primarily by regulation of HisG enzymatic activity. The sequence is that of ATP phosphoribosyltransferase from Methanococcus maripaludis (strain C5 / ATCC BAA-1333).